Reading from the N-terminus, the 420-residue chain is Arginine biosynthesis bifunctional protein ArgJ (420 aa).

Positions 167, 193, 204, 284, 415, and 420 each coordinate substrate. T204 acts as the Nucleophile in catalysis.

It belongs to the ArgJ family. As to quaternary structure, heterotetramer of two alpha and two beta chains.

It is found in the cytoplasm. It catalyses the reaction N(2)-acetyl-L-ornithine + L-glutamate = N-acetyl-L-glutamate + L-ornithine. It carries out the reaction L-glutamate + acetyl-CoA = N-acetyl-L-glutamate + CoA + H(+). It participates in amino-acid biosynthesis; L-arginine biosynthesis; L-ornithine and N-acetyl-L-glutamate from L-glutamate and N(2)-acetyl-L-ornithine (cyclic): step 1/1. The protein operates within amino-acid biosynthesis; L-arginine biosynthesis; N(2)-acetyl-L-ornithine from L-glutamate: step 1/4. Functionally, catalyzes two activities which are involved in the cyclic version of arginine biosynthesis: the synthesis of N-acetylglutamate from glutamate and acetyl-CoA as the acetyl donor, and of ornithine by transacetylation between N(2)-acetylornithine and glutamate. The sequence is that of Arginine biosynthesis bifunctional protein ArgJ from Prochlorococcus marinus (strain NATL2A).